The sequence spans 93 residues: MPRQSGFGWAWRVPLALAGSLAAATASGYLLTRGLPLDDPLERLYAGLFGALGVGLLLLVGGLLARGPGNFAWRLGGSLLVLGLALWLLAGRG.

An N-terminal signal peptide occupies residues 1–25 (MPRQSGFGWAWRVPLALAGSLAAAT). Transmembrane regions (helical) follow at residues 44 to 64 (LYAG…GGLL) and 71 to 91 (FAWR…LLAG).

Its subcellular location is the cell membrane. Its function is as follows. May play some role in transport of Fe(3+)-pyochelin. This Pseudomonas aeruginosa (strain ATCC 15692 / DSM 22644 / CIP 104116 / JCM 14847 / LMG 12228 / 1C / PRS 101 / PAO1) protein is Protein FptB (fptB).